We begin with the raw amino-acid sequence, 39 residues long: Photosystem II reaction center protein X (39 aa).

The chain crosses the membrane as a helical span at residues 10–30; the sequence is SSLVWAAVIVVIPAAVALVLI.

This sequence belongs to the PsbX family. Type 1 subfamily. As to quaternary structure, PSII is composed of 1 copy each of membrane proteins PsbA, PsbB, PsbC, PsbD, PsbE, PsbF, PsbH, PsbI, PsbJ, PsbK, PsbL, PsbM, PsbT, PsbX, PsbY, Psb30/Ycf12, peripheral proteins PsbO, CyanoQ (PsbQ), PsbU, PsbV and a large number of cofactors. It forms dimeric complexes.

The protein localises to the cellular thylakoid membrane. Involved in the binding and/or turnover of quinones at the Q(B) site of photosystem II (PSII). PSII is a light-driven water plastoquinone oxidoreductase, using light energy to abstract electrons from H(2)O, generating a proton gradient subsequently used for ATP formation. The sequence is that of Photosystem II reaction center protein X from Prochlorococcus marinus (strain MIT 9303).